The chain runs to 333 residues: Foldase protein PrsA (333 aa).

Residues 1–22 (MKSAKQIATALLVGMFTFSAVG) form the signal peptide. Cysteine 23 is lipidated: N-palmitoyl cysteine. A lipid anchor (S-diacylglycerol cysteine) is attached at cysteine 23. The PpiC domain maps to 192–283 (PNTVHLAHIL…FGWHVIKCIK (92 aa)).

It belongs to the PrsA family.

The protein resides in the cell membrane. The enzyme catalyses [protein]-peptidylproline (omega=180) = [protein]-peptidylproline (omega=0). Plays a major role in protein secretion by helping the post-translocational extracellular folding of several secreted proteins. In Clostridium acetobutylicum (strain ATCC 824 / DSM 792 / JCM 1419 / IAM 19013 / LMG 5710 / NBRC 13948 / NRRL B-527 / VKM B-1787 / 2291 / W), this protein is Foldase protein PrsA.